We begin with the raw amino-acid sequence, 215 residues long: Pyridoxine/pyridoxamine 5'-phosphate oxidase (215 aa).

Residues 9–12 and Lys69 contribute to the substrate site; that span reads RRDY. Residues 64-69, 79-80, Lys86, and Gln108 contribute to the FMN site; these read RVLLLK and FS. The substrate site is built by Tyr126, Arg130, and Ser134. FMN-binding positions include 143 to 144 and Trp188; that span reads QS. A substrate-binding site is contributed by 194-196; it reads RLH. Arg198 serves as a coordination point for FMN.

This sequence belongs to the pyridoxamine 5'-phosphate oxidase family. As to quaternary structure, homodimer. FMN serves as cofactor.

The catalysed reaction is pyridoxamine 5'-phosphate + O2 + H2O = pyridoxal 5'-phosphate + H2O2 + NH4(+). It carries out the reaction pyridoxine 5'-phosphate + O2 = pyridoxal 5'-phosphate + H2O2. It participates in cofactor metabolism; pyridoxal 5'-phosphate salvage; pyridoxal 5'-phosphate from pyridoxamine 5'-phosphate: step 1/1. It functions in the pathway cofactor metabolism; pyridoxal 5'-phosphate salvage; pyridoxal 5'-phosphate from pyridoxine 5'-phosphate: step 1/1. Its function is as follows. Catalyzes the oxidation of either pyridoxine 5'-phosphate (PNP) or pyridoxamine 5'-phosphate (PMP) into pyridoxal 5'-phosphate (PLP). The protein is Pyridoxine/pyridoxamine 5'-phosphate oxidase of Azotobacter vinelandii (strain DJ / ATCC BAA-1303).